A 592-amino-acid chain; its full sequence is V-type ATP synthase alpha chain 2 (592 aa).

237-244 contacts ATP; it reads GGFGTGKT.

The protein belongs to the ATPase alpha/beta chains family.

The catalysed reaction is ATP + H2O + 4 H(+)(in) = ADP + phosphate + 5 H(+)(out). In terms of biological role, produces ATP from ADP in the presence of a proton gradient across the membrane. The V-type alpha chain is a catalytic subunit. In Clostridium tetani (strain Massachusetts / E88), this protein is V-type ATP synthase alpha chain 2.